The following is an 812-amino-acid chain: G patch domain-containing protein 1 homolog (812 aa).

The segment at methionine 1–arginine 42 is disordered. Residues glutamine 29 to glycine 40 show a composition bias toward basic and acidic residues. The region spanning serine 145–lysine 191 is the G-patch domain. 2 disordered regions span residues alanine 384–glutamate 416 and asparagine 584–lysine 812. Over residues isoleucine 586–serine 609 the composition is skewed to basic and acidic residues. Composition is skewed to acidic residues over residues aspartate 610–alanine 630 and aspartate 653–glutamate 668. Over residues glutamate 669–glutamine 720 the composition is skewed to basic and acidic residues. Positions methionine 761–serine 794 are enriched in basic residues. Positions aspartate 800–lysine 812 are enriched in acidic residues.

This sequence belongs to the GPATCH1 family.

In Caenorhabditis elegans, this protein is G patch domain-containing protein 1 homolog.